Here is a 142-residue protein sequence, read N- to C-terminus: Transcription antitermination protein NusB (142 aa).

Belongs to the NusB family.

In terms of biological role, involved in transcription antitermination. Required for transcription of ribosomal RNA (rRNA) genes. Binds specifically to the boxA antiterminator sequence of the ribosomal RNA (rrn) operons. This is Transcription antitermination protein NusB from Borreliella burgdorferi (strain ATCC 35210 / DSM 4680 / CIP 102532 / B31) (Borrelia burgdorferi).